A 318-amino-acid polypeptide reads, in one-letter code: 4-hydroxy-3-methylbut-2-enyl diphosphate reductase (318 aa).

Cys12 contacts [4Fe-4S] cluster. His41 and His74 together coordinate (2E)-4-hydroxy-3-methylbut-2-enyl diphosphate. The dimethylallyl diphosphate site is built by His41 and His74. His41 and His74 together coordinate isopentenyl diphosphate. Cys96 contributes to the [4Fe-4S] cluster binding site. His124 contacts (2E)-4-hydroxy-3-methylbut-2-enyl diphosphate. His124 contacts dimethylallyl diphosphate. An isopentenyl diphosphate-binding site is contributed by His124. Glu126 functions as the Proton donor in the catalytic mechanism. Residue Thr168 coordinates (2E)-4-hydroxy-3-methylbut-2-enyl diphosphate. [4Fe-4S] cluster is bound at residue Cys198. (2E)-4-hydroxy-3-methylbut-2-enyl diphosphate-binding residues include Ser226, Ser227, Asn228, and Ser270. The dimethylallyl diphosphate site is built by Ser226, Ser227, Asn228, and Ser270. Residues Ser226, Ser227, Asn228, and Ser270 each contribute to the isopentenyl diphosphate site.

Belongs to the IspH family. [4Fe-4S] cluster is required as a cofactor.

It catalyses the reaction isopentenyl diphosphate + 2 oxidized [2Fe-2S]-[ferredoxin] + H2O = (2E)-4-hydroxy-3-methylbut-2-enyl diphosphate + 2 reduced [2Fe-2S]-[ferredoxin] + 2 H(+). The enzyme catalyses dimethylallyl diphosphate + 2 oxidized [2Fe-2S]-[ferredoxin] + H2O = (2E)-4-hydroxy-3-methylbut-2-enyl diphosphate + 2 reduced [2Fe-2S]-[ferredoxin] + 2 H(+). Its pathway is isoprenoid biosynthesis; dimethylallyl diphosphate biosynthesis; dimethylallyl diphosphate from (2E)-4-hydroxy-3-methylbutenyl diphosphate: step 1/1. The protein operates within isoprenoid biosynthesis; isopentenyl diphosphate biosynthesis via DXP pathway; isopentenyl diphosphate from 1-deoxy-D-xylulose 5-phosphate: step 6/6. Functionally, catalyzes the conversion of 1-hydroxy-2-methyl-2-(E)-butenyl 4-diphosphate (HMBPP) into a mixture of isopentenyl diphosphate (IPP) and dimethylallyl diphosphate (DMAPP). Acts in the terminal step of the DOXP/MEP pathway for isoprenoid precursor biosynthesis. This is 4-hydroxy-3-methylbut-2-enyl diphosphate reductase from Psychrobacter sp. (strain PRwf-1).